Here is a 348-residue protein sequence, read N- to C-terminus: Dihydroorotase (348 aa).

2 residues coordinate Zn(2+): His17 and His19. Substrate contacts are provided by residues 19 to 21 and Asn45; that span reads HLR. Lys103, His140, and His178 together coordinate Zn(2+). An N6-carboxylysine modification is found at Lys103. His140 lines the substrate pocket. Leu223 serves as a coordination point for substrate. Zn(2+) is bound at residue Asp251. Asp251 is a catalytic residue. The substrate site is built by His255 and Ala267.

This sequence belongs to the metallo-dependent hydrolases superfamily. DHOase family. Class II DHOase subfamily. As to quaternary structure, homodimer. Zn(2+) serves as cofactor.

The catalysed reaction is (S)-dihydroorotate + H2O = N-carbamoyl-L-aspartate + H(+). The protein operates within pyrimidine metabolism; UMP biosynthesis via de novo pathway; (S)-dihydroorotate from bicarbonate: step 3/3. Functionally, catalyzes the reversible cyclization of carbamoyl aspartate to dihydroorotate. This Yersinia pseudotuberculosis serotype O:1b (strain IP 31758) protein is Dihydroorotase.